The chain runs to 257 residues: Cilia- and flagella-associated protein 300 (257 aa).

It belongs to the CFAP300 family.

Its subcellular location is the cytoplasm. It is found in the cytoskeleton. The protein localises to the flagellum axoneme. Cilium- and flagellum-specific protein that plays a role in axonemal structure organization and motility. Plays a role in outer and inner dynein arm assembly. In Chlamydomonas reinhardtii (Chlamydomonas smithii), this protein is Cilia- and flagella-associated protein 300.